The following is a 92-amino-acid chain: MARSIWKGPFVDGYLIKKVQKLMKSGKSEMIKTWSRRSTILPLFVGFTFSVHNGNKFIPVYINEEMVGRKLGEFAPTRTFHGHGADKKVKRK.

Belongs to the universal ribosomal protein uS19 family.

In terms of biological role, protein S19 forms a complex with S13 that binds strongly to the 16S ribosomal RNA. This chain is Small ribosomal subunit protein uS19, found in Rickettsia typhi (strain ATCC VR-144 / Wilmington).